Consider the following 296-residue polypeptide: Polyamine aminopropyltransferase (296 aa).

Residues His16 to Lys251 form the PABS domain. Gln46 serves as a coordination point for S-methyl-5'-thioadenosine. Residues His77 and Asp101 each contribute to the spermidine site. S-methyl-5'-thioadenosine is bound by residues Glu121 and Asn152–Gly153. Catalysis depends on Asp170, which acts as the Proton acceptor. Residue Asp170–Asp173 coordinates spermidine.

Belongs to the spermidine/spermine synthase family. As to quaternary structure, homotetramer.

The protein localises to the cytoplasm. It carries out the reaction S-adenosyl 3-(methylsulfanyl)propylamine + putrescine = S-methyl-5'-thioadenosine + spermidine + H(+). It functions in the pathway amine and polyamine biosynthesis; spermidine biosynthesis; spermidine from putrescine: step 1/1. Strongly inhibited by S-adenosyl-1,8-diamino-3-thiooctane. In terms of biological role, catalyzes the irreversible transfer of a propylamine group from the amino donor S-adenosylmethioninamine (decarboxy-AdoMet) to putrescine (1,4-diaminobutane) to yield spermidine. It has lower affinity and lower activity towards 1,3-diaminopropane, cadaverine (1,5-diaminopentane), agmatine, norspermidine and spermidine (in vitro). In Thermotoga maritima (strain ATCC 43589 / DSM 3109 / JCM 10099 / NBRC 100826 / MSB8), this protein is Polyamine aminopropyltransferase.